We begin with the raw amino-acid sequence, 115 residues long: MSAQKSAGIQLLLDAEREATKIVQKAREYRTKRVREARDEAKKEIEAYKAQKEAEFKKFEAEHTQGNQAAQEEANAEAEARIREIKEAGNKNREQVIKDLLHAVFTPSPEAMAAH.

The protein belongs to the V-ATPase G subunit family. As to quaternary structure, V-ATPase is a heteromultimeric enzyme composed of a peripheral catalytic V1 complex (components A to H) attached to an integral membrane V0 proton pore complex (components: a, c, c', c'', d, e, f and VOA1).

The protein resides in the vacuole membrane. Its function is as follows. Subunit of the V1 complex of vacuolar(H+)-ATPase (V-ATPase), a multisubunit enzyme composed of a peripheral complex (V1) that hydrolyzes ATP and a membrane integral complex (V0) that translocates protons. V-ATPase is responsible for acidifying and maintaining the pH of intracellular compartments. The protein is V-type proton ATPase subunit G (vma-10) of Neurospora crassa (strain ATCC 24698 / 74-OR23-1A / CBS 708.71 / DSM 1257 / FGSC 987).